A 367-amino-acid chain; its full sequence is Leucine-rich repeat-containing protein 28 (367 aa).

LRR repeat units follow at residues 16-36 (KHKN…ELLK), 42-63 (HLER…LAQK), 66-87 (NLVE…IGSL), 89-111 (KLQC…GGLR), 112-133 (ALRH…VGDL), 135-156 (ELQT…LHLC), 158-180 (SLQY…CQLP), 181-202 (SLNE…LGRS), and 204-226 (ELQY…LYNK).

This is Leucine-rich repeat-containing protein 28 (Lrrc28) from Mus musculus (Mouse).